We begin with the raw amino-acid sequence, 59 residues long: Small, acid-soluble spore protein C1 (59 aa).

This sequence belongs to the alpha/beta-type SASP family. In terms of processing, SASP are degraded in the first minutes of spore germination and provide amino acids for both new protein synthesis and metabolism.

Its function is as follows. SASP are bound to spore DNA. They are double-stranded DNA-binding proteins that cause DNA to change to an a-like conformation. They protect the DNA backbone from chemical and enzymatic cleavage and are thus involved in dormant spore's high resistance to UV light. The chain is Small, acid-soluble spore protein C1 (sspC1) from Clostridium perfringens (strain 13 / Type A).